Reading from the N-terminus, the 171-residue chain is Probable chorismate pyruvate-lyase (171 aa).

Positions 36, 78, 116, and 157 each coordinate substrate.

It belongs to the UbiC family.

The protein localises to the cytoplasm. The enzyme catalyses chorismate = 4-hydroxybenzoate + pyruvate. The protein operates within cofactor biosynthesis; ubiquinone biosynthesis. Its function is as follows. Removes the pyruvyl group from chorismate, with concomitant aromatization of the ring, to provide 4-hydroxybenzoate (4HB) for the ubiquinone pathway. This is Probable chorismate pyruvate-lyase from Bartonella henselae (strain ATCC 49882 / DSM 28221 / CCUG 30454 / Houston 1) (Rochalimaea henselae).